The chain runs to 480 residues: Pyruvate kinase (480 aa).

Substrate is bound at residue Arg-36. K(+) contacts are provided by Asn-38, Ser-40, and Asp-70. 38-41 (NFSH) provides a ligand contact to ATP. ATP contacts are provided by Arg-77 and Lys-160. Glu-225 is a binding site for Mg(2+). Substrate-binding residues include Gly-251, Asp-252, and Thr-284. Asp-252 contacts Mg(2+).

It belongs to the pyruvate kinase family. Homotetramer. Mg(2+) serves as cofactor. The cofactor is K(+).

It carries out the reaction pyruvate + ATP = phosphoenolpyruvate + ADP + H(+). Its pathway is carbohydrate degradation; glycolysis; pyruvate from D-glyceraldehyde 3-phosphate: step 5/5. With respect to regulation, allosterically activated by AMP and by several sugar phosphates. Belongs to type II PK. This chain is Pyruvate kinase (pykA), found in Buchnera aphidicola subsp. Acyrthosiphon pisum (strain APS) (Acyrthosiphon pisum symbiotic bacterium).